Consider the following 900-residue polypeptide: MYCDKGASSLANGLLPNVSGDITAKDNILDALDSSAEEHFWGRYIDGFEGQIFPQIPVSVHEAHLTGRARYEIILGNSMVTTLYTVSSIIRTGWALLVSQYTESQDVVIVSSLELPSQAMGGTILFPIRFRIRQDGRTEELLQSAKKHADKVLSSQKHDFPHTKDFVDPFSNSILLICTESQPSHSLEELLTELSASKKCALVLRCELLEDKISISAMFDPQVVRPRQTRRILDQLGHILKQISGSDMLVGDLDFLSPEDRQEIGRWNSRSALSDECIHALISKQAQQNPAAMAVNAHDGNFTYGELESYATRLAAHLIHIGVKPGNFVPTLFEKSKWTQVGILAILKAGAAFVMLDPSHPPARNQLICRKANACFALASAPCEPVLSMAVPHVITLSHSFMEELGRLQPPHEQKSPCLDPRAVAYLLFTSGSTGQPKGAILEHRSFAAASRGVVAMTHMSSTTRTLQHSSYSFGAAIVEIIATLVAGGCVVVLSDTERLSNVAASMVAYSVNWAFMTPSFARTVNPADVPCLRVLATGGEGVTSDIVETWASFVSLYTVYGSAEQSSIAAMAGPLATHQRGNSANVGSPFAGCYAWIVQPDRPEKLAPVGCVGELVLEGALVARGYIDEVESTAAAFPKGFSWRCLFPLHQEGSTRFYRTGDLVRYAVDGTLEFVARRNGYIKLRGQRIELGEIESQLKAVARQPYEFCVEVVVPKGETADKAVLVAFVALGSAYTDNEICESAISSPEQFDQGILVDVLGHVEERLAETLPAFMIPRFFFPLQHFPVTSSGKIARKILREQAAQMSVLQLAELSLGSVEKKELQSDMERYLRSVWVQLLGVPEDFIGANDSFFRVGGDSLKAIKLFQRLRRDGYNLNVTSIVAAPTLSQMARNCSLLD.

Residues lysine 284 to arginine 686 form an adenylation region. The Carrier domain occupies glutamate 824–aspartate 900. The residue at position 861 (serine 861) is an O-(pantetheine 4'-phosphoryl)serine.

It belongs to the NRP synthetase family.

Its pathway is mycotoxin biosynthesis. Functionally, nonribosomal peptide synthetase; part of the gene clusters that mediate the biosynthesis of AM-toxins, host-selective toxins (HSTs) causing Alternaria blotch on apple, a worldwide distributed disease. AM-toxins are cyclic depsipeptides containing the 3 residues 2-hydroxy-isovaleric acid (2-HIV), dehydroalanine, L-alanine which are common for all 3 AM-toxins I to III. The fourth precursor is L-alpha-amino-methoxyphenyl-valeric acid (L-Amv) for AM-toxin I, L-alpha-amino-phenyl-valeric acid (L-Apv) for AM-toxin II, and L-alpha-amino-hydroxyphenyl-valeric acid (L-Ahv) for AM-toxin III. AM-toxins have two target sites for affecting susceptible apple cells; they cause invagination of the plasma membrane and electrolyte loss and chloroplast disorganization. The non-ribosomal peptide synthetase AMT1 contains 4 catalytic modules and is responsible for activation of each residue in AM-toxin. The aldo-keto reductase AMT2 catalyzes the conversion of 2-keto-isovaleric acid (2-KIV) to 2-hydroxy-isovaleric acid (2-HIV), one of the precursor residues incorporated by AMT1 during AM-toxin biosynthesis, by reduction of its ketone to an alcohol. The cytochrome P450 monooxygenase AMT3 and the thioesterase AMT4 are also important for AM-toxin production, but their exact function within the AM-toxin biosynthesis are not known yet. Up to 21 proteins (including AMT1 to AMT4) are predicted to be involved in AM-toxin biosynthesis since their expression ishighly up-regulated in AM-toxin-producing cultures. The sequence is that of Nonribosomal peptide synthetase AMT10 from Alternaria alternata (Alternaria rot fungus).